Here is a 399-residue protein sequence, read N- to C-terminus: Probable tRNA sulfurtransferase (399 aa).

The region spanning 60-165 is the THUMP domain; it reads YAVMERLKRV…TEGTYISCET (106 aa). Residues 183-184, 208-209, arginine 265, glycine 287, and glutamine 296 contribute to the ATP site; these read LL and HF.

This sequence belongs to the ThiI family.

It is found in the cytoplasm. The enzyme catalyses [ThiI sulfur-carrier protein]-S-sulfanyl-L-cysteine + a uridine in tRNA + 2 reduced [2Fe-2S]-[ferredoxin] + ATP + H(+) = [ThiI sulfur-carrier protein]-L-cysteine + a 4-thiouridine in tRNA + 2 oxidized [2Fe-2S]-[ferredoxin] + AMP + diphosphate. It carries out the reaction [ThiS sulfur-carrier protein]-C-terminal Gly-Gly-AMP + S-sulfanyl-L-cysteinyl-[cysteine desulfurase] + AH2 = [ThiS sulfur-carrier protein]-C-terminal-Gly-aminoethanethioate + L-cysteinyl-[cysteine desulfurase] + A + AMP + 2 H(+). It participates in cofactor biosynthesis; thiamine diphosphate biosynthesis. Catalyzes the ATP-dependent transfer of a sulfur to tRNA to produce 4-thiouridine in position 8 of tRNAs, which functions as a near-UV photosensor. Also catalyzes the transfer of sulfur to the sulfur carrier protein ThiS, forming ThiS-thiocarboxylate. This is a step in the synthesis of thiazole, in the thiamine biosynthesis pathway. The sulfur is donated as persulfide by IscS. The protein is Probable tRNA sulfurtransferase of Brevibacillus brevis (strain 47 / JCM 6285 / NBRC 100599).